An 832-amino-acid chain; its full sequence is WD repeat-containing protein 75 (832 aa).

WD repeat units follow at residues 4–43, 47–86, 90–134, 148–187, 196–233, 239–278, 281–320, 326–364, 378–425, 432–474, 485–523, 527–567, and 572–609; these read KTDI…KVYS, EEWL…KLWD, GILI…QLVA, KELS…YFFR, LKAT…RLWR, KEYT…VQWQ, DMSK…SIIE, SGLI…QFYS, QQEY…KLWA, SFVL…KAWC, YWSC…TLWS, WELL…CCWN, and ALEW…FVFK. Disordered regions lie at residues 704-723 and 759-811; these read QHKL…HTQG and VREE…AQER. Acidic residues predominate over residues 764-785; that stretch reads DSSEQEMDSEKEEEESEEEMEA. Residues 799–811 are compositionally biased toward basic and acidic residues; sequence DEQKPKLSKAQER.

As to quaternary structure, component of the proposed t-UTP subcomplex of the ribosomal small subunit (SSU) processome. SSU processome is composed of more than 70 proteins and the RNA chaperone small nucleolar RNA (snoRNA) U3.

Its subcellular location is the nucleus. It localises to the nucleolus. Functionally, ribosome biogenesis factor. Part of the small subunit (SSU) processome, first precursor of the small eukaryotic ribosomal subunit. During the assembly of the SSU processome in the nucleolus, many ribosome biogenesis factors, an RNA chaperone and ribosomal proteins associate with the nascent pre-rRNA and work in concert to generate RNA folding, modifications, rearrangements and cleavage as well as targeted degradation of pre-ribosomal RNA by the RNA exosome. Involved in nucleolar processing of pre-18S ribosomal RNA. Required for optimal pre-ribosomal RNA transcription by RNA polymerase I. The polypeptide is WD repeat-containing protein 75 (wdr75) (Danio rerio (Zebrafish)).